The sequence spans 334 residues: Cathepsin J (334 aa).

A signal peptide spans 1 to 17 (MTPAVFLVILCFGVASG). The propeptide at 18-113 (APARDPNLDA…PSAQKQVSIG (96 aa)) is activation peptide. Cys138 is a catalytic residue. N-linked (GlcNAc...) asparagine glycosylation is found at Asn217, Asn221, and Asn268. The cysteines at positions 269 and 322 are disulfide-linked. His276 is an active-site residue. An N-linked (GlcNAc...) asparagine glycan is attached at Asn288. Asn300 is an active-site residue.

The protein belongs to the peptidase C1 family. In terms of tissue distribution, expressed specifically in placenta.

The protein resides in the lysosome. The sequence is that of Cathepsin J (Ctsj) from Rattus norvegicus (Rat).